Here is a 2281-residue protein sequence, read N- to C-terminus: Protein Ycf2 (2281 aa).

An ATP-binding site is contributed by Gly-1634–Ser-1641.

The protein belongs to the Ycf2 family.

The protein resides in the plastid. It is found in the chloroplast stroma. In terms of biological role, probable ATPase of unknown function. Its presence in a non-photosynthetic plant (Epifagus virginiana) and experiments in tobacco indicate that it has an essential function which is probably not related to photosynthesis. The protein is Protein Ycf2 of Buxus microphylla (Littleleaf boxwood).